Here is a 275-residue protein sequence, read N- to C-terminus: Thymidylate synthase (275 aa).

A dUMP-binding site is contributed by 138–139 (RR). Cys-158 functions as the Nucleophile in the catalytic mechanism. Residues 178 to 181 (RSCD), Asn-189, and 219 to 221 (HIY) each bind dUMP. Asp-181 lines the (6R)-5,10-methylene-5,6,7,8-tetrahydrofolate pocket. (6R)-5,10-methylene-5,6,7,8-tetrahydrofolate is bound at residue Ala-274.

Belongs to the thymidylate synthase family. Bacterial-type ThyA subfamily. As to quaternary structure, homodimer.

The protein localises to the cytoplasm. It carries out the reaction dUMP + (6R)-5,10-methylene-5,6,7,8-tetrahydrofolate = 7,8-dihydrofolate + dTMP. It participates in pyrimidine metabolism; dTTP biosynthesis. Catalyzes the reductive methylation of 2'-deoxyuridine-5'-monophosphate (dUMP) to 2'-deoxythymidine-5'-monophosphate (dTMP) while utilizing 5,10-methylenetetrahydrofolate (mTHF) as the methyl donor and reductant in the reaction, yielding dihydrofolate (DHF) as a by-product. This enzymatic reaction provides an intracellular de novo source of dTMP, an essential precursor for DNA biosynthesis. In Fusobacterium nucleatum subsp. nucleatum (strain ATCC 25586 / DSM 15643 / BCRC 10681 / CIP 101130 / JCM 8532 / KCTC 2640 / LMG 13131 / VPI 4355), this protein is Thymidylate synthase.